We begin with the raw amino-acid sequence, 204 residues long: Photosynthetic NDH subunit of subcomplex B 3, chloroplastic (204 aa).

Disordered stretches follow at residues 1-24 (MGSVQLSGSGLVASLPPNHSFSHK) and 45-68 (KTVRAISTAPASQPPAADEPDEPP). The transit peptide at 1 to 48 (MGSVQLSGSGLVASLPPNHSFSHKTKLNKPNSYFFRSKHNAARTKTVR) directs the protein to the chloroplast. Residues 76–180 (HSVLLPDGTP…STGLVVIQQL (105 aa)) form the 2Fe-2S ferredoxin-type domain. [2Fe-2S] cluster is bound by residues C120, C126, C129, and C162.

Part of the chloroplast NDH complex, composed of a mixture of chloroplast and nucleus encoded subunits. Component of the NDH subcomplex B, at least composed of PnsB1, PnsB2, PnsB3, PnsB4 and PnsB5.

Its subcellular location is the plastid. The protein localises to the chloroplast thylakoid membrane. NDH shuttles electrons from NAD(P)H:plastoquinone, via FMN and iron-sulfur (Fe-S) centers, to quinones in the photosynthetic chain and possibly in a chloroplast respiratory chain. The immediate electron acceptor for the enzyme in this species is believed to be plastoquinone. Couples the redox reaction to proton translocation, and thus conserves the redox energy in a proton gradient. The chain is Photosynthetic NDH subunit of subcomplex B 3, chloroplastic from Arabidopsis thaliana (Mouse-ear cress).